We begin with the raw amino-acid sequence, 220 residues long: Glycerol-3-phosphate acyltransferase (220 aa).

6 helical membrane passes run 11-31 (INVI…GYAL), 70-90 (LLVL…SKLF), 96-116 (LQWM…FLNF), 127-147 (GSVV…WFFV), 153-173 (ISSL…FFVP), and 193-213 (MVLI…NLLA).

This sequence belongs to the PlsY family. Probably interacts with PlsX.

It is found in the cell inner membrane. It catalyses the reaction an acyl phosphate + sn-glycerol 3-phosphate = a 1-acyl-sn-glycero-3-phosphate + phosphate. It participates in lipid metabolism; phospholipid metabolism. Functionally, catalyzes the transfer of an acyl group from acyl-phosphate (acyl-PO(4)) to glycerol-3-phosphate (G3P) to form lysophosphatidic acid (LPA). This enzyme utilizes acyl-phosphate as fatty acyl donor, but not acyl-CoA or acyl-ACP. This Helicobacter pylori (strain ATCC 700392 / 26695) (Campylobacter pylori) protein is Glycerol-3-phosphate acyltransferase.